The primary structure comprises 162 residues: Corticoliberin-2 (162 aa).

An N-terminal signal peptide occupies residues 1 to 24 (MRLNFLVTTMALLVAFPPPYECRA). Residues 25 to 119 (IDSSSNQPVT…ALDSEERERR (95 aa)) constitute a propeptide that is removed on maturation. A disordered region spans residues 57 to 79 (LGNRNKNSPRSPPDTYPEASQYS). Phenylalanine amide is present on Phe-160.

Belongs to the sauvagine/corticotropin-releasing factor/urotensin I family.

The protein localises to the secreted. In terms of biological role, this hormone from hypothalamus regulates the release of corticotropin from pituitary gland. The chain is Corticoliberin-2 (crf2) from Catostomus commersonii (White sucker).